The chain runs to 322 residues: MAPGKGGYKQINKALNICAFEDYLDGQQATLPPLQDVEQISPRVIRVLGQNPGKFTLQGTNTYIVGTGSERLIIDTGQGIPDWADLISTTLLDGNFSLSHVLLTHWHGDHTGGVPDLLRLYPDLISGIYKHTPSKIQQPIEDGQVFKVEGATVRAVHAPGHSSDHMCFILEEEQAMFTGDNVLGHGTSAVEHLSTWMAALQQMKSHNCRKGYPAHGIVINDLQGRITGQLAQKFRRERQVLKALEQVKSQERAMAGGRGKGSVTVKQLVSTMHGDSLDGGIRELALEPFTEEILRKLAEDGKVAFEIRTGIKKWFVVGTALD.

Residues His105, His107, Asp109, and His110 each coordinate Zn(2+). Asp109 serves as the catalytic Proton donor/acceptor.

The protein belongs to the metallo-beta-lactamase superfamily. Zn(2+) is required as a cofactor.

The enzyme catalyses atrochrysone carboxyl-[ACP] + H2O = atrochrysone carboxylate + holo-[ACP] + H(+). The protein operates within secondary metabolite biosynthesis. Atrochrysone carboxyl ACP thioesterase; part of the gene cluster that mediates the biosynthesis of the dimeric xanthones cryptosporioptides. The pathway begins with the synthesis of atrochrysone thioester by the polyketide synthase dmx-nrPKS. The atrochrysone carboxyl ACP thioesterase dmxR1 then breaks the thioester bond and releases the atrochrysone carboxylic acid from dmx-nrPKS. Atrochrysone carboxylic acid is decarboxylated by the decarboxylase dmxR15, and oxidized by the anthrone oxygenase dmxR16 to yield emodin. Emodin is then reduced to emodin hydroquinone by the oxidoreductase dmxR7. A-ring reduction by the short chain dehydrogenase dmxR18, dehydration by the scytalone dehydratase-like protein dmxR17 and probable spontaneous re-oxidation, results in overall deoxygenation to chrysophanol. Baeyer-Villiger oxidation by the Baeyer-Villiger monooxygenase (BVMO) dmxR6 then yields monodictylactone in equilibrium with monodictyphenone. In the case of the cryptosporioptides biosynthesis, monodictylactone is reduced at C-12 to an alcohol (by the short chain dehydrogenases dmxR12 or dmxR8) and hydroxylated at C-5 by dmxR9, yielding the electron-rich aromatic which could eliminate H(2)O to form the ortho-quinonemethide, followed by tautomerisation to paraquinone and complete the formal reduction to produce the 10-methylgroup. Conjugate addition of C-4a-OH to the resulting paraquinone by the monooxygenase dmxR10 then gives cyclohexadienone, which is then reduced at C-5 by the short chain dehydrogenase dmxR3 to give the dihydroxanthone. The 6,7-epoxide in the cryptosporioptides could be introduced by the cytochrome P450 monooxygenase dmxL3. The highly reducing PKS dmxL2 manufactures butyrate, which is further carboxylated by dmxL1 to form ethylmalonate. It is not yet clear whether the carboxylation occurs while the butyrate is attached to the ACP of dmxL2, but this unusual fungal metabolite could then be esterified to O-5 by the O-acetyltransferase dmxR13. Finally, dimerization performed by dmxR5 gives the observed dimers cryptosporioptides A, B and C as the final products of the pathway. The chain is Atrochrysone carboxyl ACP thioesterase dmxR1 from Cryptosporiopsis sp. (strain 8999).